The following is a 186-amino-acid chain: Peptidyl-tRNA hydrolase (186 aa).

Residue Tyr14 coordinates tRNA. Residue His19 is the Proton acceptor of the active site. Tyr64, Asn66, and Asn112 together coordinate tRNA.

Belongs to the PTH family. In terms of assembly, monomer.

It is found in the cytoplasm. The catalysed reaction is an N-acyl-L-alpha-aminoacyl-tRNA + H2O = an N-acyl-L-amino acid + a tRNA + H(+). Hydrolyzes ribosome-free peptidyl-tRNAs (with 1 or more amino acids incorporated), which drop off the ribosome during protein synthesis, or as a result of ribosome stalling. In terms of biological role, catalyzes the release of premature peptidyl moieties from peptidyl-tRNA molecules trapped in stalled 50S ribosomal subunits, and thus maintains levels of free tRNAs and 50S ribosomes. The protein is Peptidyl-tRNA hydrolase of Bacillus cereus (strain ATCC 14579 / DSM 31 / CCUG 7414 / JCM 2152 / NBRC 15305 / NCIMB 9373 / NCTC 2599 / NRRL B-3711).